A 324-amino-acid chain; its full sequence is Elongation factor P--(R)-beta-lysine ligase (324 aa).

75-77 (SPE) lines the substrate pocket. ATP contacts are provided by residues 99 to 101 (RNE) and asparagine 108. Tyrosine 117 contributes to the substrate binding site. 243–244 (EL) is an ATP binding site. A substrate-binding site is contributed by glutamate 250. Residue glycine 299 coordinates ATP.

The protein belongs to the class-II aminoacyl-tRNA synthetase family. EpmA subfamily. As to quaternary structure, homodimer.

It carries out the reaction D-beta-lysine + L-lysyl-[protein] + ATP = N(6)-((3R)-3,6-diaminohexanoyl)-L-lysyl-[protein] + AMP + diphosphate + H(+). Functionally, with EpmB is involved in the beta-lysylation step of the post-translational modification of translation elongation factor P (EF-P). Catalyzes the ATP-dependent activation of (R)-beta-lysine produced by EpmB, forming a lysyl-adenylate, from which the beta-lysyl moiety is then transferred to the epsilon-amino group of a conserved specific lysine residue in EF-P. The polypeptide is Elongation factor P--(R)-beta-lysine ligase (Pseudoalteromonas translucida (strain TAC 125)).